The sequence spans 359 residues: uncharacterized protein (359 aa).

The next 6 helical transmembrane spans lie at 4–24 (ELFV…HLFK), 36–56 (FQAV…VFGF), 68–88 (IPIM…ALAM), 94–114 (LLIT…IAAI), 129–149 (HAFY…YFLI), and 155–175 (ELHL…LYII). Residues 223–357 (FQFALIYMDI…GRNRVCFSEK (135 aa)) form the GGDEF domain.

It localises to the cell membrane. This is an uncharacterized protein from Bacillus subtilis (strain 168).